Consider the following 777-residue polypeptide: Reticulon-1 (777 aa).

Disordered stretches follow at residues 1-77 (MAAP…ETAS), 129-182 (NGHI…ILAD), 198-245 (TRPQ…PVEG), and 293-573 (ATHE…IPGP). Residues Ser13 and Ser68 each carry the phosphoserine modification. The segment covering 199–233 (RPQEAKGQEEQSPGLEDKDLDFKDKDSEVSTKPEG) has biased composition (basic and acidic residues). Ser210, Ser241, and Ser325 each carry phosphoserine. The span at 326-339 (PGSVTPPSSGTEPS) shows a compositional bias: low complexity. Residues Ser348 and Ser350 each carry the phosphoserine modification. Residues 393–406 (IPSSLDQEASSAES) are compositionally biased toward polar residues. The residue at position 485 (Ser485) is a Phosphoserine. Residues 495 to 510 (AIREETSSRATEERAP) show a composition bias toward basic and acidic residues. The span at 525 to 534 (TPVTLQSRPE) shows a compositional bias: polar residues. The Reticulon domain maps to 590 to 777 (AIDLLYWRDI…KIPGAKRHAE (188 aa)). The next 2 helical transmembrane spans lie at 604–624 (IVFGSFLLLLFSLTQFSVVSV) and 706–726 (FAVLMWLLTYVGALFNGLTLL).

As to quaternary structure, interacts with NDRG1. Interacts with BACE1. Interacts with TMEM33. Interacts with UGCG; regulates the ceramide glucosyltransferase activity of UGCG. In terms of tissue distribution, expressed predominantly in central and peripheral nervous system of newborn and adult rats. Low levels have been also detected in heart, adrenal gland and spleen. Expression of isoform RTN1-B is restricted to particular neuronal types.

The protein resides in the endoplasmic reticulum membrane. Its subcellular location is the golgi apparatus membrane. Inhibits amyloid precursor protein processing, probably by blocking BACE1 activity. The polypeptide is Reticulon-1 (Rtn1) (Rattus norvegicus (Rat)).